We begin with the raw amino-acid sequence, 1138 residues long: 2'-5'-oligoadenylate synthase 3 (1138 aa).

The residue at position 1 (Met1) is an N-acetylmethionine. Residues 6-341 are OAS domain 1; it reads TPAGALDKLV…GVLVQPWEGP (336 aa). Interaction with dsRNA regions lie at residues 12–56 and 185–199; these read DKLV…VIRI and EPRK…AKLK. The tract at residues 342–462 is linker; it reads GLPRAGILDL…GSRMSPDLSQ (121 aa). Residues 370–379 are compositionally biased toward basic and acidic residues; that stretch reads LAVQSKERSQ. 2 disordered regions span residues 370-403 and 434-459; these read LAVQ…NPSA and TQST…MSPD. A compositionally biased stretch (polar residues) spans 447 to 459; it reads SSISTAGSRMSPD. OAS domain regions lie at residues 463–793 and 801–1135; these read IPSK…PWDV and TLAE…WPVK. Ser855 contributes to the ATP binding site. Residues Asp867, Asp869, and Asp939 each contribute to the Mg(2+) site. Residues Arg998, Lys1001, and Gln1020 each contribute to the ATP site.

Belongs to the 2-5A synthase family. In terms of assembly, monomer. Requires Mg(2+) as cofactor. As to expression, intestine.

The protein resides in the cytoplasm. The protein localises to the nucleus. It catalyses the reaction 3 ATP = 5'-triphosphoadenylyl-(2'-&gt;5')-adenylyl-(2'-&gt;5')-adenosine + 2 diphosphate. Produced as a latent enzyme which is activated by dsRNA generated during the course of viral infection. Strongly activated by long dsRNAs at least 50 nucleotides in length. ssRNA does not activate the enzyme. Functionally, interferon-induced, dsRNA-activated antiviral enzyme which plays a critical role in cellular innate antiviral response. In addition, it may also play a role in other cellular processes such as apoptosis, cell growth, differentiation and gene regulation. Synthesizes preferentially dimers of 2'-5'-oligoadenylates (2-5A) from ATP which then bind to the inactive monomeric form of ribonuclease L (RNase L) leading to its dimerization and subsequent activation. Activation of RNase L leads to degradation of cellular as well as viral RNA, resulting in the inhibition of protein synthesis, thus terminating viral replication. Can mediate the antiviral effect via the classical RNase L-dependent pathway or an alternative antiviral pathway independent of RNase L. This Mus musculus (Mouse) protein is 2'-5'-oligoadenylate synthase 3 (Oas3).